We begin with the raw amino-acid sequence, 183 residues long: Large ribosomal subunit protein uL22 (183 aa).

Belongs to the universal ribosomal protein uL22 family.

This chain is Large ribosomal subunit protein uL22 (RPL17), found in Podocoryna carnea (Hydrozoan).